The primary structure comprises 267 residues: Indole-3-glycerol phosphate synthase (267 aa).

The protein belongs to the TrpC family.

The catalysed reaction is 1-(2-carboxyphenylamino)-1-deoxy-D-ribulose 5-phosphate + H(+) = (1S,2R)-1-C-(indol-3-yl)glycerol 3-phosphate + CO2 + H2O. Its pathway is amino-acid biosynthesis; L-tryptophan biosynthesis; L-tryptophan from chorismate: step 4/5. The chain is Indole-3-glycerol phosphate synthase from Cupriavidus pinatubonensis (strain JMP 134 / LMG 1197) (Cupriavidus necator (strain JMP 134)).